Here is a 263-residue protein sequence, read N- to C-terminus: MRILITNDDGINAPGLDVLHTIATDIAGPGGEVWTVAPAFEQSGVGHCISYTHPTMISEFGPRRFAAEGSPADCVLAGLHDVLKDTPPDLILSGVNKGNNSAENTLYSGTIGAAIEAAIQGLPSIALSQYYGPGNISLDNPFEAASAHGADVIRKILAAPGAFESHPYKLFYNVNFPPVAAADVKGIRAVGQGFREGGTGMGMRADMAPNGRKFLWITGSPQNVPSGADTDATVNIDGYISVTPMRADLTAYDQLQSLKDAIE.

4 residues coordinate a divalent metal cation: Asp8, Asp9, Ser43, and Asn96.

It belongs to the SurE nucleotidase family. It depends on a divalent metal cation as a cofactor.

It is found in the cytoplasm. It carries out the reaction a ribonucleoside 5'-phosphate + H2O = a ribonucleoside + phosphate. Functionally, nucleotidase that shows phosphatase activity on nucleoside 5'-monophosphates. This is 5'-nucleotidase SurE from Jannaschia sp. (strain CCS1).